We begin with the raw amino-acid sequence, 89 residues long: Small ribosomal subunit protein uS15 (89 aa).

It belongs to the universal ribosomal protein uS15 family. In terms of assembly, part of the 30S ribosomal subunit. Forms a bridge to the 50S subunit in the 70S ribosome, contacting the 23S rRNA.

Functionally, one of the primary rRNA binding proteins, it binds directly to 16S rRNA where it helps nucleate assembly of the platform of the 30S subunit by binding and bridging several RNA helices of the 16S rRNA. In terms of biological role, forms an intersubunit bridge (bridge B4) with the 23S rRNA of the 50S subunit in the ribosome. The sequence is that of Small ribosomal subunit protein uS15 from Bifidobacterium longum subsp. infantis (strain ATCC 15697 / DSM 20088 / JCM 1222 / NCTC 11817 / S12).